The following is a 147-amino-acid chain: uncharacterized protein (147 aa).

The next 2 helical transmembrane spans lie at 35 to 55 (TIQL…FGNH) and 62 to 82 (IWLL…LFEP).

In terms of assembly, has been detected in a cytochrome bc1-aa3 supercomplex; its deletion however leaves complex activity unaffected.

The protein resides in the cell membrane. This is an uncharacterized protein from Corynebacterium glutamicum (strain ATCC 13032 / DSM 20300 / JCM 1318 / BCRC 11384 / CCUG 27702 / LMG 3730 / NBRC 12168 / NCIMB 10025 / NRRL B-2784 / 534).